Consider the following 569-residue polypeptide: CTP synthase (569 aa).

A Glutamine amidotransferase type-1 domain is found at 313 to 569 (RIAMVGKYTG…NASLERLKKM (257 aa)). The active-site Nucleophile is C410. Active-site residues include H541 and E543.

Belongs to the CTP synthase family.

The catalysed reaction is UTP + L-glutamine + ATP + H2O = CTP + L-glutamate + ADP + phosphate + 2 H(+). It functions in the pathway pyrimidine metabolism; CTP biosynthesis via de novo pathway; CTP from UDP: step 2/2. Its function is as follows. Catalyzes the ATP-dependent amination of UTP to CTP with either L-glutamine or ammonia as the source of nitrogen. This is CTP synthase (ctps) from Dictyostelium discoideum (Social amoeba).